Reading from the N-terminus, the 417-residue chain is Serine hydroxymethyltransferase (417 aa).

Residues L121 and 125-127 (GHL) contribute to the (6S)-5,6,7,8-tetrahydrofolate site. K229 bears the N6-(pyridoxal phosphate)lysine mark. 355–357 (SPF) lines the (6S)-5,6,7,8-tetrahydrofolate pocket.

This sequence belongs to the SHMT family. As to quaternary structure, homodimer. The cofactor is pyridoxal 5'-phosphate.

It is found in the cytoplasm. It catalyses the reaction (6R)-5,10-methylene-5,6,7,8-tetrahydrofolate + glycine + H2O = (6S)-5,6,7,8-tetrahydrofolate + L-serine. It functions in the pathway one-carbon metabolism; tetrahydrofolate interconversion. Its pathway is amino-acid biosynthesis; glycine biosynthesis; glycine from L-serine: step 1/1. Its function is as follows. Catalyzes the reversible interconversion of serine and glycine with tetrahydrofolate (THF) serving as the one-carbon carrier. This reaction serves as the major source of one-carbon groups required for the biosynthesis of purines, thymidylate, methionine, and other important biomolecules. Also exhibits THF-independent aldolase activity toward beta-hydroxyamino acids, producing glycine and aldehydes, via a retro-aldol mechanism. This chain is Serine hydroxymethyltransferase, found in Xanthomonas campestris pv. campestris (strain 8004).